The primary structure comprises 355 residues: NADH-quinone oxidoreductase subunit H (355 aa).

The next 8 membrane-spanning stretches (helical) occupy residues 25–45 (LVRILVVAVVILLCVAYLILW), 91–111 (WLYLVAPVMTVVPAFAVWAVI), 126–146 (LLYAMAISSIGVYAVILAGWA), 170–190 (MGFALVLVLMTAGSLNLSEIV), 205–225 (FLSWNWLPLLPAFVVYFVSGI), 253–273 (MAFALFFLAEYINMIVISALA), 290–310 (FIPGIFWLVLKVFALLSVFIW), and 330–350 (VFLPVTVIWVVVVGFWMMSPL).

This sequence belongs to the complex I subunit 1 family. In terms of assembly, NDH-1 is composed of 14 different subunits. Subunits NuoA, H, J, K, L, M, N constitute the membrane sector of the complex.

The protein localises to the cell inner membrane. The catalysed reaction is a quinone + NADH + 5 H(+)(in) = a quinol + NAD(+) + 4 H(+)(out). In terms of biological role, NDH-1 shuttles electrons from NADH, via FMN and iron-sulfur (Fe-S) centers, to quinones in the respiratory chain. The immediate electron acceptor for the enzyme in this species is believed to be ubiquinone. Couples the redox reaction to proton translocation (for every two electrons transferred, four hydrogen ions are translocated across the cytoplasmic membrane), and thus conserves the redox energy in a proton gradient. This subunit may bind ubiquinone. The chain is NADH-quinone oxidoreductase subunit H from Burkholderia vietnamiensis (strain G4 / LMG 22486) (Burkholderia cepacia (strain R1808)).